The following is a 43-amino-acid chain: Cytochrome b559 subunit beta (43 aa).

The helical transmembrane segment at 18–34 (WLAVHTLAVPSVFFLGA) threads the bilayer. Histidine 22 provides a ligand contact to heme.

Belongs to the PsbE/PsbF family. As to quaternary structure, heterodimer of an alpha subunit and a beta subunit. PSII is composed of 1 copy each of membrane proteins PsbA, PsbB, PsbC, PsbD, PsbE, PsbF, PsbH, PsbI, PsbJ, PsbK, PsbL, PsbM, PsbT, PsbX, PsbY, PsbZ, Psb30/Ycf12, peripheral proteins PsbO, CyanoQ (PsbQ), PsbU, PsbV and a large number of cofactors. It forms dimeric complexes. Heme b serves as cofactor.

It is found in the cellular thylakoid membrane. Its function is as follows. This b-type cytochrome is tightly associated with the reaction center of photosystem II (PSII). PSII is a light-driven water:plastoquinone oxidoreductase that uses light energy to abstract electrons from H(2)O, generating O(2) and a proton gradient subsequently used for ATP formation. It consists of a core antenna complex that captures photons, and an electron transfer chain that converts photonic excitation into a charge separation. The protein is Cytochrome b559 subunit beta of Picosynechococcus sp. (strain ATCC 27264 / PCC 7002 / PR-6) (Agmenellum quadruplicatum).